The following is a 270-amino-acid chain: Small ribosomal subunit protein uS2 (270 aa).

This sequence belongs to the universal ribosomal protein uS2 family. Component of the small ribosomal subunit. Mature ribosomes consist of a small (40S) and a large (60S) subunit. The 40S subunit contains about 33 different proteins and 1 molecule of RNA (18S). The 60S subunit contains about 49 different proteins and 3 molecules of RNA (28S, 5.8S and 5S). Interacts with oho23B/rpS21.

It is found in the cytoplasm. It localises to the nucleus. Required for the assembly and/or stability of the 40S ribosomal subunit. Required for the processing of the 20S rRNA-precursor to mature 18S rRNA in a late step of the maturation of 40S ribosomal subunits. Required during oogenesis and imaginal development. The chain is Small ribosomal subunit protein uS2 from Drosophila persimilis (Fruit fly).